An 841-amino-acid chain; its full sequence is MSDNEIKNEAPKKLSLQRRTKTTVADGKVQVEVRKSRKIDTAAVKKAQEEAALKAKQEAEAKAQAEKTAAEQAKAEAEAAKKAEGAKVEATKKSAPAVPVMPNSKPKAAAPKAEQPKQEKALDPEKEAKKKEEAELRRKQEELARQKAEMEAKRAAENARRLAEIAREEAAENGEEFEDDRFTSSYAREADRDNDRRSEANRGRGKGGVNKAKKGDREDKNERNADRRNQKDVKGKGKNAKKGSALQQAFTKPVQVNKADVVIGETITVAELANKMAVKATEIIKTMMKMGEMVTINQVIDQETAQLVAEEMGHKVILRNENELEDAVMEDRDVDAEKVTRAPVVTIMGHVDHGKTSLLDYIRKAKVAAGEAGGITQHIGAYHVETEDGKMITFLDTPGHAAFTSMRARGAKATDIVVLVVAADDGVMPQTIEAIQHARAAGAPIVVAVNKIDKPEANPDRVEQELLQHEVVSEKFGGDVQFVSVSAKKGLGIDDLLEAILLQSEVLELTAVKEGMASGVVIESYLDKGRGPVATILVQSGTLNKGDIVLCGFEYGRVRAMRDENGKEVDSAGPSIPVEVLGLSGVPAAGDEATVVRDEKKAREVALFRQGKFREVKLARQQKAKLENMFSNMTAGDVAELNVIVKADVQGSVEAICQSLAELSTDEVKVKVVGSGVGGITETDATLAAASNAIMVGFNVRADASARRVIEAENIDLRYYSIIYELLNEIKAAMSGMLQPEFKQEIIGLAEVRDVFRHPKFGAIAGCMVTEGVVKRNNPIRVLRDNVVIFEGELESLRRFKDDVSEVRNGMECGIGVKNYNDVKVGDQIEVFEVVEVKRSI.

5 stretches are compositionally biased toward basic and acidic residues: residues 1 to 12 (MSDNEIKNEAPK), 50 to 92 (EAAL…EATK), 114 to 170 (EQPK…REEA), 188 to 202 (READRDNDRRSEANR), and 213 to 235 (KKGDREDKNERNADRRNQKDVKG). Disordered regions lie at residues 1–24 (MSDNEIKNEAPKKLSLQRRTKTTV) and 50–246 (EAAL…GSAL). In terms of domain architecture, tr-type G spans 340–510 (TRAPVVTIMG…LLQSEVLELT (171 aa)). The tract at residues 349–356 (GHVDHGKT) is G1. Position 349–356 (349–356 (GHVDHGKT)) interacts with GTP. Residues 374-378 (GITQH) are G2. Positions 396-399 (DTPG) are G3. GTP is bound by residues 396-400 (DTPGH) and 450-453 (NKID). The interval 450 to 453 (NKID) is G4. A G5 region spans residues 486–488 (SAK).

This sequence belongs to the TRAFAC class translation factor GTPase superfamily. Classic translation factor GTPase family. IF-2 subfamily.

The protein resides in the cytoplasm. Functionally, one of the essential components for the initiation of protein synthesis. Protects formylmethionyl-tRNA from spontaneous hydrolysis and promotes its binding to the 30S ribosomal subunits. Also involved in the hydrolysis of GTP during the formation of the 70S ribosomal complex. The protein is Translation initiation factor IF-2 of Actinobacillus pleuropneumoniae serotype 3 (strain JL03).